We begin with the raw amino-acid sequence, 144 residues long: MELNNLKPAAGAKHAKRRVGRGIGSGLGKTAGRGHKGQKSRSGGFHKVGFEGGQMPLQRRLPKRGFTSLTKEFVGEVRLGDLEKLPVDEIDLLALKQAGLVGELTKSAKIIATGELKRKIVVKGLGATKGARAAIEAAGGSFAE.

Positions 1–56 (MELNNLKPAAGAKHAKRRVGRGIGSGLGKTAGRGHKGQKSRSGGFHKVGFEGGQMP) are disordered. Over residues 21–31 (RGIGSGLGKTA) the composition is skewed to gly residues.

It belongs to the universal ribosomal protein uL15 family. In terms of assembly, part of the 50S ribosomal subunit.

Functionally, binds to the 23S rRNA. The protein is Large ribosomal subunit protein uL15 of Burkholderia ambifaria (strain MC40-6).